We begin with the raw amino-acid sequence, 311 residues long: Pyrimidine-specific ribonucleoside hydrolase RihA (311 aa).

The active site involves H240.

This sequence belongs to the IUNH family. RihA subfamily.

Its function is as follows. Hydrolyzes cytidine or uridine to ribose and cytosine or uracil, respectively. This chain is Pyrimidine-specific ribonucleoside hydrolase RihA, found in Shigella flexneri serotype 5b (strain 8401).